An 82-amino-acid polypeptide reads, in one-letter code: Defensin-like protein 156 (82 aa).

An N-terminal signal peptide occupies residues 1-27; the sequence is MAKISCSYFLVLMLVFSVFSLVEKTKG. Disulfide bonds link Cys-31-Cys-77, Cys-41-Cys-60, Cys-46-Cys-71, and Cys-50-Cys-73.

Belongs to the DEFL family. In terms of tissue distribution, expressed in flower buds, but not in stems, roots or rosette leaves.

Its subcellular location is the secreted. The polypeptide is Defensin-like protein 156 (LCR21) (Arabidopsis thaliana (Mouse-ear cress)).